We begin with the raw amino-acid sequence, 270 residues long: L-aspartate dehydrogenase (270 aa).

A123 and N191 together coordinate NAD(+). H221 is a catalytic residue.

This sequence belongs to the L-aspartate dehydrogenase family.

It carries out the reaction L-aspartate + NADP(+) + H2O = oxaloacetate + NH4(+) + NADPH + H(+). The enzyme catalyses L-aspartate + NAD(+) + H2O = oxaloacetate + NH4(+) + NADH + H(+). Its pathway is cofactor biosynthesis; NAD(+) biosynthesis; iminoaspartate from L-aspartate (dehydrogenase route): step 1/1. Its function is as follows. Specifically catalyzes the NAD or NADP-dependent dehydrogenation of L-aspartate to iminoaspartate. This Methanocella arvoryzae (strain DSM 22066 / NBRC 105507 / MRE50) protein is L-aspartate dehydrogenase.